A 224-amino-acid chain; its full sequence is Ribonuclease 3 (224 aa).

The RNase III domain maps to 4–127 (YSKLEKCLDY…IMGAIYLESG (124 aa)). A Mg(2+)-binding site is contributed by Glu-40. Residue Asp-44 is part of the active site. Residues Asp-113 and Glu-116 each contribute to the Mg(2+) site. Residue Glu-116 is part of the active site. The 70-residue stretch at 154-223 (DYKTALQEIT…AKIAIDKLKE (70 aa)) folds into the DRBM domain.

The protein belongs to the ribonuclease III family. As to quaternary structure, homodimer. Mg(2+) is required as a cofactor.

It localises to the cytoplasm. It catalyses the reaction Endonucleolytic cleavage to 5'-phosphomonoester.. Functionally, digests double-stranded RNA. Involved in the processing of primary rRNA transcript to yield the immediate precursors to the large and small rRNAs (23S and 16S). Processes some mRNAs, and tRNAs when they are encoded in the rRNA operon. Processes pre-crRNA and tracrRNA of type II CRISPR loci if present in the organism. The protein is Ribonuclease 3 of Aliarcobacter butzleri (strain RM4018) (Arcobacter butzleri).